Reading from the N-terminus, the 92-residue chain is MEVIADRLDDIVKQNIADEKFVDFVIHGLEHQCPAILRPLIRLFIDILLFVIVIYIFTVRLVSRNYQILLVLVALVITLTIFLLLYTIIVLD.

The next 2 helical transmembrane spans lie at 39-59 and 67-87; these read PLIR…IFTV and QILL…LLYT.

Belongs to the orthopoxvirus OPG096 family. In terms of assembly, interacts with OPG158.

It localises to the virion membrane. It is found in the host cytoplasm. Its subcellular location is the host endoplasmic reticulum membrane. Early protein involved in virion morphogenesis. Participates in the formation and elongation of crescent-shaped membrane precursors of immature virions in cytoplasmic factories. This chain is Protein OPG096 (OPG096), found in Monkeypox virus.